A 325-amino-acid chain; its full sequence is Intelectin (325 aa).

The signal sequence occupies residues 1-23 (MKYCVLLIMIHLLLVELPQFPEA). The Fibrinogen C-terminal domain maps to 44–266 (IRSSYIGRSC…AAMAICSGVK (223 aa)). Cysteine 53 and cysteine 82 are disulfide-bonded. Ca(2+) contacts are provided by histidine 98, glutamate 99, asparagine 101, glycine 104, glycine 109, aspartate 110, aspartate 145, glutamate 274, glutamate 286, and aspartate 294. Cystine bridges form between cysteine 106–cysteine 292 and cysteine 262–cysteine 277. A carbohydrate is bound by residues 274–275 (EH) and glutamate 286.

Expressed at high levels in caudal kidney, liver, and swim bladder. Also expressed in gill, spleen, intestine and head kidney. Not detected in heart.

In terms of biological role, may be involved in innate immune surveillance. May specifically recognize carbohydrate chains of pathogens and bacterial components in a calcium-dependent manner. In vitro binds N-acetylglucosamine residues. The polypeptide is Intelectin (Oncorhynchus mykiss (Rainbow trout)).